The sequence spans 412 residues: Phosphoglycerate kinase (412 aa).

Residues 24–26 (DLN), R40, 63–66 (HLGR), R122, and R162 each bind substrate. ATP contacts are provided by residues K212, G300, E331, and 360–363 (GGDS).

This sequence belongs to the phosphoglycerate kinase family. In terms of assembly, monomer.

The protein resides in the cytoplasm. It catalyses the reaction (2R)-3-phosphoglycerate + ATP = (2R)-3-phospho-glyceroyl phosphate + ADP. Its pathway is carbohydrate degradation; glycolysis; pyruvate from D-glyceraldehyde 3-phosphate: step 2/5. The protein is Phosphoglycerate kinase (pgk) of Mycobacterium bovis (strain ATCC BAA-935 / AF2122/97).